Reading from the N-terminus, the 210-residue chain is N-(5'-phosphoribosyl)anthranilate isomerase (210 aa).

Belongs to the TrpF family.

The enzyme catalyses N-(5-phospho-beta-D-ribosyl)anthranilate = 1-(2-carboxyphenylamino)-1-deoxy-D-ribulose 5-phosphate. The protein operates within amino-acid biosynthesis; L-tryptophan biosynthesis; L-tryptophan from chorismate: step 3/5. This Nostoc punctiforme (strain ATCC 29133 / PCC 73102) protein is N-(5'-phosphoribosyl)anthranilate isomerase.